The following is a 97-amino-acid chain: uncharacterized protein (97 aa).

This is an uncharacterized protein from Enterobacteria phage T4 (Bacteriophage T4).